Reading from the N-terminus, the 91-residue chain is N(2)-fixation sustaining protein CowN (91 aa).

This sequence belongs to the CowN family.

Functionally, is required to sustain N(2)-dependent growth in the presence of low levels of carbon monoxide (CO). Probably acts by protecting the N(2) fixation ability of the nitrogenase complex, which is inactivated in the presence of CO. This Beijerinckia indica subsp. indica (strain ATCC 9039 / DSM 1715 / NCIMB 8712) protein is N(2)-fixation sustaining protein CowN.